Here is a 254-residue protein sequence, read N- to C-terminus: 3-deoxy-manno-octulosonate cytidylyltransferase (254 aa).

This sequence belongs to the KdsB family.

The protein localises to the cytoplasm. The enzyme catalyses 3-deoxy-alpha-D-manno-oct-2-ulosonate + CTP = CMP-3-deoxy-beta-D-manno-octulosonate + diphosphate. It functions in the pathway nucleotide-sugar biosynthesis; CMP-3-deoxy-D-manno-octulosonate biosynthesis; CMP-3-deoxy-D-manno-octulosonate from 3-deoxy-D-manno-octulosonate and CTP: step 1/1. The protein operates within bacterial outer membrane biogenesis; lipopolysaccharide biosynthesis. Functionally, activates KDO (a required 8-carbon sugar) for incorporation into bacterial lipopolysaccharide in Gram-negative bacteria. The polypeptide is 3-deoxy-manno-octulosonate cytidylyltransferase (Pseudomonas syringae pv. tomato (strain ATCC BAA-871 / DC3000)).